The following is a 769-amino-acid chain: PDZ domain-containing protein 4 (769 aa).

The PDZ domain occupies 130 to 214; the sequence is EVELYKSSHR…TNISLLVARP (85 aa). Residues 221–315 are disordered; the sequence is RWKDSDRDDF…TNTPGSLRKF (95 aa). The span at 229 to 239 shows a compositional bias: acidic residues; that stretch reads DFLDDFGSENE. Serine 236 carries the phosphoserine modification. The span at 282-298 shows a compositional bias: basic and acidic residues; sequence RTDESTRNEESSEHDLL. Residues 389-419 adopt a coiled-coil conformation; it reads VNRNESLGHEMAMLEEELRHLEFKCRNILRA. Positions 445-579 are disordered; the sequence is ASEPKKHELS…RHRGQGQEGE (135 aa). The segment covering 447–467 has biased composition (basic and acidic residues); sequence EPKKHELSDISELPEKSDKDS. At serine 454 the chain carries Phosphoserine. The segment covering 468 to 479 has biased composition (polar residues); that stretch reads TSAYNTGESCRS. The segment covering 530-547 has biased composition (basic and acidic residues); the sequence is LSRDPEAGRRQHAEERGR.

Brain-specific. Expressed in fetal and adult brain. Up-regulated in synovial carcinomas.

The protein localises to the cytoplasm. Its subcellular location is the cell cortex. The chain is PDZ domain-containing protein 4 (PDZD4) from Homo sapiens (Human).